The following is a 307-amino-acid chain: tRNA dimethylallyltransferase (307 aa).

10–17 (GPTAVGKT) serves as a coordination point for ATP. 12–17 (TAVGKT) provides a ligand contact to substrate. The interval 35-38 (DSMQ) is interaction with substrate tRNA.

The protein belongs to the IPP transferase family. In terms of assembly, monomer. The cofactor is Mg(2+).

The catalysed reaction is adenosine(37) in tRNA + dimethylallyl diphosphate = N(6)-dimethylallyladenosine(37) in tRNA + diphosphate. Its function is as follows. Catalyzes the transfer of a dimethylallyl group onto the adenine at position 37 in tRNAs that read codons beginning with uridine, leading to the formation of N6-(dimethylallyl)adenosine (i(6)A). This Ligilactobacillus salivarius (strain UCC118) (Lactobacillus salivarius) protein is tRNA dimethylallyltransferase.